A 500-amino-acid chain; its full sequence is Histidinol dehydrogenase homolog 1 (500 aa).

The segment at 1-25 (MPPAGGIFHRPPTTRKSRRLTPRSA) is disordered. Positions 12-21 (PTTRKSRRLT) are enriched in basic residues. Zn(2+)-binding residues include Q313 and H316. Active-site proton acceptor residues include E381 and H382. Positions 415 and 475 each coordinate Zn(2+).

This sequence belongs to the histidinol dehydrogenase family. Zn(2+) serves as cofactor.

The protein is Histidinol dehydrogenase homolog 1 of Mesorhizobium japonicum (strain LMG 29417 / CECT 9101 / MAFF 303099) (Mesorhizobium loti (strain MAFF 303099)).